A 338-amino-acid polypeptide reads, in one-letter code: Aspartate--ammonia ligase (338 aa).

Belongs to the class-II aminoacyl-tRNA synthetase family. AsnA subfamily.

It localises to the cytoplasm. The catalysed reaction is L-aspartate + NH4(+) + ATP = L-asparagine + AMP + diphosphate + H(+). Its pathway is amino-acid biosynthesis; L-asparagine biosynthesis; L-asparagine from L-aspartate (ammonia route): step 1/1. The chain is Aspartate--ammonia ligase from Lactobacillus delbrueckii subsp. bulgaricus (strain ATCC 11842 / DSM 20081 / BCRC 10696 / JCM 1002 / NBRC 13953 / NCIMB 11778 / NCTC 12712 / WDCM 00102 / Lb 14).